We begin with the raw amino-acid sequence, 74 residues long: ATP synthase subunit 9, mitochondrial (74 aa).

The next 2 helical transmembrane spans lie at 16 to 36 and 50 to 70; these read GLIGAGIGIGVVFGSLIIGVS and ILGFAFSEATGLFALMMAFLL.

This sequence belongs to the ATPase C chain family. As to quaternary structure, F-type ATPases have 2 components, CF(1) - the catalytic core - and CF(0) - the membrane proton channel. CF(1) has five subunits: alpha(3), beta(3), gamma(1), delta(1), epsilon(1). CF(0) has three main subunits: a, b and c.

It is found in the mitochondrion inner membrane. In terms of biological role, mitochondrial membrane ATP synthase (F(1)F(0) ATP synthase or Complex V) produces ATP from ADP in the presence of a proton gradient across the membrane which is generated by electron transport complexes of the respiratory chain. F-type ATPases consist of two structural domains, F(1) - containing the extramembraneous catalytic core and F(0) - containing the membrane proton channel, linked together by a central stalk and a peripheral stalk. During catalysis, ATP synthesis in the catalytic domain of F(1) is coupled via a rotary mechanism of the central stalk subunits to proton translocation. Part of the complex F(0) domain. A homomeric c-ring of probably 10 subunits is part of the complex rotary element. This chain is ATP synthase subunit 9, mitochondrial (atp-9), found in Neurospora crassa (strain ATCC 24698 / 74-OR23-1A / CBS 708.71 / DSM 1257 / FGSC 987).